Here is a 388-residue protein sequence, read N- to C-terminus: 8-amino-7-oxononanoate synthase (388 aa).

R20 lines the substrate pocket. 107-108 (GY) lines the pyridoxal 5'-phosphate pocket. H132 is a binding site for substrate. Residues S178, H206, and T237 each coordinate pyridoxal 5'-phosphate. N6-(pyridoxal phosphate)lysine is present on K240. Residue T356 participates in substrate binding.

It belongs to the class-II pyridoxal-phosphate-dependent aminotransferase family. BioF subfamily. As to quaternary structure, homodimer. Pyridoxal 5'-phosphate is required as a cofactor.

The enzyme catalyses 6-carboxyhexanoyl-[ACP] + L-alanine + H(+) = (8S)-8-amino-7-oxononanoate + holo-[ACP] + CO2. Its pathway is cofactor biosynthesis; biotin biosynthesis. Its function is as follows. Catalyzes the decarboxylative condensation of pimeloyl-[acyl-carrier protein] and L-alanine to produce 8-amino-7-oxononanoate (AON), [acyl-carrier protein], and carbon dioxide. The chain is 8-amino-7-oxononanoate synthase from Herminiimonas arsenicoxydans.